The primary structure comprises 56 residues: Secreted virulence factor CLU5a (56 aa).

The first 18 residues, 1-18 (MKVSLTLLATLCASLASA), serve as a signal peptide directing secretion.

This sequence belongs to the MC69 virulence factor family. As to quaternary structure, homodimer; disulfide-linked. Dimerization can possibly extend to multimerisation.

The protein localises to the secreted. Secreted protein required for appressorial penetration of intact host epidermal cells and for pathogenicit, but not for subsequent biotrophic and necrotrophic colonization of leaves. In Colletotrichum graminicola (strain M1.001 / M2 / FGSC 10212) (Maize anthracnose fungus), this protein is Secreted virulence factor CLU5a.